The sequence spans 112 residues: Putative pterin-4-alpha-carbinolamine dehydratase (112 aa).

The protein belongs to the pterin-4-alpha-carbinolamine dehydratase family.

The catalysed reaction is (4aS,6R)-4a-hydroxy-L-erythro-5,6,7,8-tetrahydrobiopterin = (6R)-L-erythro-6,7-dihydrobiopterin + H2O. The protein is Putative pterin-4-alpha-carbinolamine dehydratase of Shewanella sp. (strain ANA-3).